Reading from the N-terminus, the 461-residue chain is Protein YIG1 (461 aa).

The interval 58–80 (SNVGEDGGDVGNYSEEDDDGDEE) is disordered. Over residues 71–80 (SEEDDDGDEE) the composition is skewed to acidic residues.

Its subcellular location is the cytoplasm. It is found in the nucleus. In terms of biological role, involved in the regulation of anaerobiotic glycerol metabolism. The polypeptide is Protein YIG1 (YIG1) (Saccharomyces cerevisiae (strain ATCC 204508 / S288c) (Baker's yeast)).